The sequence spans 66 residues: Protein translocase subunit SecE (66 aa).

The chain crosses the membrane as a helical span at residues Leu-29–Val-49.

Belongs to the SecE/SEC61-gamma family. Component of the Sec protein translocase complex. Heterotrimer consisting of SecY, SecE and SecG subunits. The heterotrimers can form oligomers, although 1 heterotrimer is thought to be able to translocate proteins. Interacts with the ribosome. Interacts with SecDF, and other proteins may be involved. Interacts with SecA.

Its subcellular location is the cell inner membrane. Essential subunit of the Sec protein translocation channel SecYEG. Clamps together the 2 halves of SecY. May contact the channel plug during translocation. This Rickettsia montanensis protein is Protein translocase subunit SecE.